A 480-amino-acid chain; its full sequence is Cytochrome b-c1 complex subunit 1, mitochondrial (480 aa).

The N-terminal 34 residues, 1-34, are a transit peptide targeting the mitochondrion; it reads MAASAVCRAACSGTQVLLRTRRSPALLRLPALRG. N6-acetyllysine occurs at positions 111 and 138. N6-acetyllysine; alternate is present on K163. Residue K163 is modified to N6-succinyllysine; alternate. S212 is modified (phosphoserine). The residue at position 214 (T214) is a Phosphothreonine. Position 248 is an N6-acetyllysine (K248).

The protein belongs to the peptidase M16 family. UQCRC1/QCR1 subfamily. In terms of assembly, component of the ubiquinol-cytochrome c oxidoreductase (cytochrome b-c1 complex, complex III, CIII), a multisubunit enzyme composed of 11 subunits. The complex is composed of 3 respiratory subunits cytochrome b, cytochrome c1 and Rieske protein UQCRFS1, 2 core protein subunits UQCRC1/QCR1 and UQCRC2/QCR2, and 6 low-molecular weight protein subunits UQCRH/QCR6, UQCRB/QCR7, UQCRQ/QCR8, UQCR10/QCR9, UQCR11/QCR10 and subunit 9, the cleavage product of Rieske protein UQCRFS1. The complex exists as an obligatory dimer and forms supercomplexes (SCs) in the inner mitochondrial membrane with NADH-ubiquinone oxidoreductase (complex I, CI) and cytochrome c oxidase (complex IV, CIV), resulting in different assemblies (supercomplex SCI(1)III(2)IV(1) and megacomplex MCI(2)III(2)IV(2)). Interacts with UQCC6. Interacts with STMP1. Post-translationally, acetylation of Lys-138 is observed in liver mitochondria from fasted mice but not from fed mice. Expressed in neurons and astrocytes of the cerebral cortex and hippocampus (at protein level).

It is found in the mitochondrion inner membrane. Functionally, component of the ubiquinol-cytochrome c oxidoreductase, a multisubunit transmembrane complex that is part of the mitochondrial electron transport chain which drives oxidative phosphorylation. The respiratory chain contains 3 multisubunit complexes succinate dehydrogenase (complex II, CII), ubiquinol-cytochrome c oxidoreductase (cytochrome b-c1 complex, complex III, CIII) and cytochrome c oxidase (complex IV, CIV), that cooperate to transfer electrons derived from NADH and succinate to molecular oxygen, creating an electrochemical gradient over the inner membrane that drives transmembrane transport and the ATP synthase. The cytochrome b-c1 complex catalyzes electron transfer from ubiquinol to cytochrome c, linking this redox reaction to translocation of protons across the mitochondrial inner membrane, with protons being carried across the membrane as hydrogens on the quinol. In the process called Q cycle, 2 protons are consumed from the matrix, 4 protons are released into the intermembrane space and 2 electrons are passed to cytochrome c. The 2 core subunits UQCRC1/QCR1 and UQCRC2/QCR2 are homologous to the 2 mitochondrial-processing peptidase (MPP) subunits beta-MPP and alpha-MPP respectively, and they seem to have preserved their MPP processing properties. May be involved in the in situ processing of UQCRFS1 into the mature Rieske protein and its mitochondrial targeting sequence (MTS)/subunit 9 when incorporated into complex III. Seems to play an important role in the maintenance of proper mitochondrial function in nigral dopaminergic neurons. The protein is Cytochrome b-c1 complex subunit 1, mitochondrial (Uqcrc1) of Mus musculus (Mouse).